Here is a 628-residue protein sequence, read N- to C-terminus: ATP-dependent zinc metalloprotease FtsH (628 aa).

At 1-7 (MKLSWKT) the chain is on the stromal side. The helical transmembrane segment at 8-28 (LLLWSLPIFVVGFFFWQGFLG) threads the bilayer. The Lumenal segment spans residues 29–118 (PTTTDVGSNI…AHPPKSTSAV (90 aa)). Residues 119–139 (WGLLGNLLFPLILVGGLAFLF) form a helical membrane-spanning segment. Topologically, residues 140-628 (RRSNNASGGP…PEKNYYISQF (489 aa)) are stromal. Position 213 to 220 (213 to 220 (GPPGTGKT)) interacts with ATP. His434 is a binding site for Zn(2+). The active site involves Glu435. 2 residues coordinate Zn(2+): His438 and Asp512.

This sequence in the central section; belongs to the AAA ATPase family. In the C-terminal section; belongs to the peptidase M41 family. Homohexamer. The cofactor is Zn(2+).

It is found in the plastid. It localises to the chloroplast thylakoid membrane. Acts as a processive, ATP-dependent zinc metallopeptidase. The polypeptide is ATP-dependent zinc metalloprotease FtsH (Porphyra purpurea (Red seaweed)).